Reading from the N-terminus, the 584-residue chain is UvrABC system protein C (584 aa).

A GIY-YIG domain is found at 14 to 91 (HKPGCYLWKD…IKTHLPKYNI (78 aa)). Residues 192-227 (DHILMILQTKEQHAVTKLDFENAQKYAEQQKALTSI) enclose the UVR domain.

This sequence belongs to the UvrC family. As to quaternary structure, interacts with UvrB in an incision complex.

Its subcellular location is the cytoplasm. Its function is as follows. The UvrABC repair system catalyzes the recognition and processing of DNA lesions. UvrC both incises the 5' and 3' sides of the lesion. The N-terminal half is responsible for the 3' incision and the C-terminal half is responsible for the 5' incision. This chain is UvrABC system protein C, found in Ureaplasma parvum serovar 3 (strain ATCC 27815 / 27 / NCTC 11736).